Reading from the N-terminus, the 141-residue chain is MIVSVLFIIFVGLGGGITVGAGFVAFLTVMGIIPRLMQLTKTMRFVQAYEAAVILGAVCGGWETLHMNHLYLTKWIAVPVGLLAGLFVGMLAAALTEVLNVLPILAKRIGLRSKIIILLMAIVIGKIAGSLFHWLYFIDHS.

4 helical membrane-spanning segments follow: residues Phe-7–Leu-27, Phe-45–Leu-65, Trp-75–Leu-95, and Ile-115–Leu-135.

The protein resides in the cell membrane. In Bacillus subtilis (strain 168), this protein is Stage V sporulation protein AB (spoVAB).